The primary structure comprises 260 residues: Phosphatidate cytidylyltransferase (260 aa).

The next 7 membrane-spanning stretches (helical) occupy residues 9-29 (IIAL…LMLF), 46-66 (MIKF…IIML), 70-90 (AGSW…FILL), 102-122 (FMDA…FMYL), 130-150 (LHYI…AYIF), 172-192 (FVGG…FVDF), and 196-216 (LWLL…GDLV).

This sequence belongs to the CDS family.

It is found in the cell membrane. It catalyses the reaction a 1,2-diacyl-sn-glycero-3-phosphate + CTP + H(+) = a CDP-1,2-diacyl-sn-glycerol + diphosphate. It participates in phospholipid metabolism; CDP-diacylglycerol biosynthesis; CDP-diacylglycerol from sn-glycerol 3-phosphate: step 3/3. The polypeptide is Phosphatidate cytidylyltransferase (cdsA) (Staphylococcus saprophyticus subsp. saprophyticus (strain ATCC 15305 / DSM 20229 / NCIMB 8711 / NCTC 7292 / S-41)).